A 205-amino-acid chain; its full sequence is Protein GrpE (205 aa).

The segment covering 1 to 18 (MSEEVKNSVETEENKASK) has biased composition (basic and acidic residues). Positions 1–60 (MSEEVKNSVETEENKASKDNATQAPNPTENHNTAQETEKAENSEKTESATQENESLDKLK) are disordered. Polar residues predominate over residues 19–35 (DNATQAPNPTENHNTAQ). Over residues 36–47 (ETEKAENSEKTE) the composition is skewed to basic and acidic residues.

It belongs to the GrpE family. In terms of assembly, homodimer.

It localises to the cytoplasm. Participates actively in the response to hyperosmotic and heat shock by preventing the aggregation of stress-denatured proteins, in association with DnaK and GrpE. It is the nucleotide exchange factor for DnaK and may function as a thermosensor. Unfolded proteins bind initially to DnaJ; upon interaction with the DnaJ-bound protein, DnaK hydrolyzes its bound ATP, resulting in the formation of a stable complex. GrpE releases ADP from DnaK; ATP binding to DnaK triggers the release of the substrate protein, thus completing the reaction cycle. Several rounds of ATP-dependent interactions between DnaJ, DnaK and GrpE are required for fully efficient folding. This Chloroherpeton thalassium (strain ATCC 35110 / GB-78) protein is Protein GrpE.